A 203-amino-acid polypeptide reads, in one-letter code: Thymidylate kinase (203 aa).

Position 10 to 17 (10 to 17 (GIDGAGKS)) interacts with ATP.

The protein belongs to the thymidylate kinase family.

It catalyses the reaction dTMP + ATP = dTDP + ADP. In terms of biological role, phosphorylation of dTMP to form dTDP in both de novo and salvage pathways of dTTP synthesis. The sequence is that of Thymidylate kinase from Cupriavidus pinatubonensis (strain JMP 134 / LMG 1197) (Cupriavidus necator (strain JMP 134)).